A 61-amino-acid polypeptide reads, in one-letter code: Photosystem II reaction center protein K (61 aa).

A propeptide spanning residues 1-24 (MLNIFSLICICLNSALYSSNFFFA) is cleaved from the precursor. A helical transmembrane segment spans residues 40 to 60 (MPVIPLFFFLLAFVWQAAVSF).

The protein belongs to the PsbK family. In terms of assembly, PSII is composed of 1 copy each of membrane proteins PsbA, PsbB, PsbC, PsbD, PsbE, PsbF, PsbH, PsbI, PsbJ, PsbK, PsbL, PsbM, PsbT, PsbX, PsbY, PsbZ, Psb30/Ycf12, at least 3 peripheral proteins of the oxygen-evolving complex and a large number of cofactors. It forms dimeric complexes.

It localises to the plastid. The protein localises to the chloroplast thylakoid membrane. In terms of biological role, one of the components of the core complex of photosystem II (PSII). PSII is a light-driven water:plastoquinone oxidoreductase that uses light energy to abstract electrons from H(2)O, generating O(2) and a proton gradient subsequently used for ATP formation. It consists of a core antenna complex that captures photons, and an electron transfer chain that converts photonic excitation into a charge separation. This is Photosystem II reaction center protein K from Vitis vinifera (Grape).